We begin with the raw amino-acid sequence, 249 residues long: 15,16-dihydrobiliverdin:ferredoxin oxidoreductase (249 aa).

Belongs to the HY2 family.

The catalysed reaction is 15,16-dihydrobiliverdin + oxidized 2[4Fe-4S]-[ferredoxin] = biliverdin IXalpha + reduced 2[4Fe-4S]-[ferredoxin] + 2 H(+). Catalyzes the two-electron reduction of biliverdin IX-alpha at the C15 methine bridge. The polypeptide is 15,16-dihydrobiliverdin:ferredoxin oxidoreductase (Prochlorococcus marinus (strain MIT 9303)).